A 225-amino-acid chain; its full sequence is NAD(P)H-quinone oxidoreductase subunit K, chloroplastic (225 aa).

Positions 43, 44, 108, and 139 each coordinate [4Fe-4S] cluster.

Belongs to the complex I 20 kDa subunit family. As to quaternary structure, NDH is composed of at least 16 different subunits, 5 of which are encoded in the nucleus. It depends on [4Fe-4S] cluster as a cofactor.

The protein localises to the plastid. Its subcellular location is the chloroplast thylakoid membrane. It catalyses the reaction a plastoquinone + NADH + (n+1) H(+)(in) = a plastoquinol + NAD(+) + n H(+)(out). It carries out the reaction a plastoquinone + NADPH + (n+1) H(+)(in) = a plastoquinol + NADP(+) + n H(+)(out). NDH shuttles electrons from NAD(P)H:plastoquinone, via FMN and iron-sulfur (Fe-S) centers, to quinones in the photosynthetic chain and possibly in a chloroplast respiratory chain. The immediate electron acceptor for the enzyme in this species is believed to be plastoquinone. Couples the redox reaction to proton translocation, and thus conserves the redox energy in a proton gradient. The sequence is that of NAD(P)H-quinone oxidoreductase subunit K, chloroplastic from Hordeum vulgare (Barley).